A 162-amino-acid chain; its full sequence is SsrA-binding protein (162 aa).

This sequence belongs to the SmpB family.

It is found in the cytoplasm. In terms of biological role, required for rescue of stalled ribosomes mediated by trans-translation. Binds to transfer-messenger RNA (tmRNA), required for stable association of tmRNA with ribosomes. tmRNA and SmpB together mimic tRNA shape, replacing the anticodon stem-loop with SmpB. tmRNA is encoded by the ssrA gene; the 2 termini fold to resemble tRNA(Ala) and it encodes a 'tag peptide', a short internal open reading frame. During trans-translation Ala-aminoacylated tmRNA acts like a tRNA, entering the A-site of stalled ribosomes, displacing the stalled mRNA. The ribosome then switches to translate the ORF on the tmRNA; the nascent peptide is terminated with the 'tag peptide' encoded by the tmRNA and targeted for degradation. The ribosome is freed to recommence translation, which seems to be the essential function of trans-translation. The polypeptide is SsrA-binding protein (Granulibacter bethesdensis (strain ATCC BAA-1260 / CGDNIH1)).